The primary structure comprises 490 residues: Protein nucleotidyltransferase YdiU (490 aa).

ATP contacts are provided by Gly92, Gly94, Arg95, Lys114, Asp126, Gly127, Arg177, and Arg184. Asp256 serves as the catalytic Proton acceptor. Mg(2+) is bound by residues Asn257 and Asp266. Asp266 lines the ATP pocket.

Belongs to the SELO family. Requires Mg(2+) as cofactor. The cofactor is Mn(2+).

It catalyses the reaction L-seryl-[protein] + ATP = 3-O-(5'-adenylyl)-L-seryl-[protein] + diphosphate. The enzyme catalyses L-threonyl-[protein] + ATP = 3-O-(5'-adenylyl)-L-threonyl-[protein] + diphosphate. The catalysed reaction is L-tyrosyl-[protein] + ATP = O-(5'-adenylyl)-L-tyrosyl-[protein] + diphosphate. It carries out the reaction L-histidyl-[protein] + UTP = N(tele)-(5'-uridylyl)-L-histidyl-[protein] + diphosphate. It catalyses the reaction L-seryl-[protein] + UTP = O-(5'-uridylyl)-L-seryl-[protein] + diphosphate. The enzyme catalyses L-tyrosyl-[protein] + UTP = O-(5'-uridylyl)-L-tyrosyl-[protein] + diphosphate. Functionally, nucleotidyltransferase involved in the post-translational modification of proteins. It can catalyze the addition of adenosine monophosphate (AMP) or uridine monophosphate (UMP) to a protein, resulting in modifications known as AMPylation and UMPylation. This chain is Protein nucleotidyltransferase YdiU, found in Bordetella avium (strain 197N).